Reading from the N-terminus, the 529-residue chain is BAR/IMD domain-containing adapter protein 2-like 2 (529 aa).

The region spanning 1–239 (MAPEMDQFYR…HSPGLLGPAL (239 aa)) is the IMD domain. 2 disordered regions span residues 221-327 (EASR…GGAR) and 403-510 (TSMS…TNPF). Residues Ser231, Ser272, and Ser302 each carry the phosphoserine modification. Over residues 299–313 (SASSLYSGSAQSSRS) the composition is skewed to low complexity. One can recognise an SH3 domain in the interval 324–387 (GGARRVRALV…PEAYVKALEE (64 aa)). Composition is skewed to low complexity over residues 403-413 (TSMSPMTPMNP) and 452-462 (RSRTPSRVPSR). Residues 463 to 472 (APSPAPPPLP) are compositionally biased toward pro residues. 2 positions are modified to phosphoserine: Ser478 and Ser481.

Expressed in the epithelial layer of the intestine (at protein level).

It localises to the cell membrane. The protein localises to the cell junction. The protein resides in the cytoplasmic vesicle membrane. Functionally, phosphoinositides-binding protein that induces the formation of planar or gently curved membrane structures. Binds to phosphoinositides, including to phosphatidylinositol 4,5-bisphosphate (PtdIns(4,5)P2) headgroups. There seems to be no clear preference for a specific phosphoinositide. The protein is BAR/IMD domain-containing adapter protein 2-like 2 (BAIAP2L2) of Homo sapiens (Human).